Consider the following 472-residue polypeptide: Uronate isomerase (472 aa).

Belongs to the metallo-dependent hydrolases superfamily. Uronate isomerase family.

The catalysed reaction is D-glucuronate = D-fructuronate. It carries out the reaction aldehydo-D-galacturonate = keto-D-tagaturonate. Its pathway is carbohydrate metabolism; pentose and glucuronate interconversion. This chain is Uronate isomerase, found in Halalkalibacterium halodurans (strain ATCC BAA-125 / DSM 18197 / FERM 7344 / JCM 9153 / C-125) (Bacillus halodurans).